Reading from the N-terminus, the 389-residue chain is Mitochondrial tRNA-specific 2-thiouridylase 1 (389 aa).

ATP is bound by residues 8–15 and Met34; that span reads GVSGGVDS. The segment at 94–96 is interaction with target base in tRNA; sequence NPD. Cys99 (nucleophile) is an active-site residue. Cys99 and Cys205 are disulfide-bonded. Residue Gly124 participates in ATP binding. An interaction with tRNA region spans residues 154-156; the sequence is KDQ. Catalysis depends on Cys205, which acts as the Cysteine persulfide intermediate. The segment at 317–318 is interaction with tRNA; it reads QH.

This sequence belongs to the MnmA/TRMU family.

It is found in the mitochondrion. It carries out the reaction 5-taurinomethyluridine(34) in tRNA + S-sulfanyl-L-cysteinyl-[protein] + AH2 + ATP = 5-taurinomethyl-2-thiouridine(34) in tRNA + L-cysteinyl-[protein] + A + AMP + diphosphate + H(+). In terms of biological role, catalyzes the 2-thiolation of uridine at the wobble position (U34) of mitochondrial tRNA(Lys), tRNA(Glu) and tRNA(Gln). Required for the formation of 5-taurinomethyl-2-thiouridine (tm5s2U) of mitochondrial tRNA(Lys), tRNA(Glu), and tRNA(Gln) at the wobble position. ATP is required to activate the C2 atom of the wobble base. This Drosophila melanogaster (Fruit fly) protein is Mitochondrial tRNA-specific 2-thiouridylase 1.